The primary structure comprises 249 residues: Uridylate kinase (249 aa).

An ATP-binding site is contributed by 15 to 18 (KLSG). The segment at 23–28 (GEEGFG) is involved in allosteric activation by GTP. Glycine 57 provides a ligand contact to UMP. Residues glycine 58 and arginine 62 each contribute to the ATP site. UMP contacts are provided by residues aspartate 77 and 138–145 (TGNPFFTT). Residues threonine 165, phenylalanine 171, and aspartate 174 each contribute to the ATP site.

Belongs to the UMP kinase family. Homohexamer.

It localises to the cytoplasm. The catalysed reaction is UMP + ATP = UDP + ADP. The protein operates within pyrimidine metabolism; CTP biosynthesis via de novo pathway; UDP from UMP (UMPK route): step 1/1. With respect to regulation, allosterically activated by GTP. Inhibited by UTP. Catalyzes the reversible phosphorylation of UMP to UDP. In Psychromonas ingrahamii (strain DSM 17664 / CCUG 51855 / 37), this protein is Uridylate kinase.